A 103-amino-acid chain; its full sequence is Large ribosomal subunit protein bL21 (103 aa).

It belongs to the bacterial ribosomal protein bL21 family. In terms of assembly, part of the 50S ribosomal subunit. Contacts protein L20.

This protein binds to 23S rRNA in the presence of protein L20. The polypeptide is Large ribosomal subunit protein bL21 (Kineococcus radiotolerans (strain ATCC BAA-149 / DSM 14245 / SRS30216)).